A 311-amino-acid chain; its full sequence is Olfactory receptor 8H1 (311 aa).

The Extracellular segment spans residues Met1–Met25. Residue Asn5 is glycosylated (N-linked (GlcNAc...) asparagine). The chain crosses the membrane as a helical span at residues Ala26–Ile46. Over Leu47–Gln54 the chain is Cytoplasmic. A helical membrane pass occupies residues Leu55–Thr75. At Val76 to Ala98 the chain is on the extracellular side. A disulfide bridge connects residues Cys96 and Cys188. A helical transmembrane segment spans residues Gln99–Tyr119. Over Asp120–Arg138 the chain is Cytoplasmic. Residues Leu139 to Val159 form a helical membrane-spanning segment. Over Val160 to Ile196 the chain is Extracellular. The helical transmembrane segment at Met197–Ser216 threads the bilayer. Over Tyr217–Ala236 the chain is Cytoplasmic. The helical transmembrane segment at Leu237–Thr257 threads the bilayer. The Extracellular segment spans residues Tyr258 to Asp270. Residues Gln271 to Leu291 form a helical membrane-spanning segment. Residues Arg292–Arg311 are Cytoplasmic-facing.

The protein belongs to the G-protein coupled receptor 1 family.

It is found in the cell membrane. Odorant receptor. This is Olfactory receptor 8H1 (OR8H1) from Homo sapiens (Human).